The chain runs to 455 residues: Epoxide hydrolase 1 (455 aa).

Residues 1-21 (MLLELLLASVLGFVIYWFVSG) traverse the membrane as a helical; Signal-anchor for type III membrane protein segment. The Cytoplasmic segment spans residues 22 to 455 (DKEESLPLED…CKFVGLVERQ (434 aa)). Asp226 (nucleophile) is an active-site residue. Arg295 bears the Dimethylated arginine mark. The active-site Proton donor is Tyr374. His431 (proton acceptor) is an active-site residue.

This sequence belongs to the peptidase S33 family.

It localises to the microsome membrane. The protein localises to the endoplasmic reticulum membrane. It carries out the reaction cis-stilbene oxide + H2O = (1R,2R)-hydrobenzoin. The enzyme catalyses 1-(4-methoxyphenyl)-N-methyl-N-[(3-methyloxetan-3-yl)methyl]methanamine + H2O = 2-{[(4-methoxybenzyl)(methyl)amino]methyl}-2-methylpropane-1,3-diol. It catalyses the reaction 8,9-epoxy-(5Z,11Z,14Z)-eicosatrienoate + H2O = 8,9-dihydroxy-(5Z,11Z,14Z)-eicosatrienoate. The catalysed reaction is 11,12-epoxy-(5Z,8Z,14Z)-eicosatrienoate + H2O = 11,12-dihydroxy-(5Z,8Z,14Z)-eicosatrienoate. It carries out the reaction 2-(5Z,8Z,11Z,14Z-eicosatetraenoyl)-glycerol + H2O = glycerol + (5Z,8Z,11Z,14Z)-eicosatetraenoate + H(+). With respect to regulation, inhibited by 10-hydroxystearamide and methoxy-arachidonyl fluorophosphate. Biotransformation enzyme that catalyzes the hydrolysis of arene and aliphatic epoxides to less reactive and more water soluble dihydrodiols by the trans addition of water. May play a role in the metabolism of endogenous lipids such as epoxide-containing fatty acids. Metabolizes the abundant endocannabinoid 2-arachidonoylglycerol (2-AG) to free arachidonic acid (AA) and glycerol. Binds 20(S)-hydroxycholesterol (20(S)-OHC). This chain is Epoxide hydrolase 1 (EPHX1), found in Oryctolagus cuniculus (Rabbit).